We begin with the raw amino-acid sequence, 397 residues long: Oxysterol-binding protein homolog C354.07c (397 aa).

Asn186 and Asn195 each carry an N-linked (GlcNAc...) asparagine glycan.

It belongs to the OSBP family.

It localises to the endoplasmic reticulum. This Schizosaccharomyces pombe (strain 972 / ATCC 24843) (Fission yeast) protein is Oxysterol-binding protein homolog C354.07c.